A 693-amino-acid chain; its full sequence is Elongation factor G (693 aa).

Residues 6–286 (KYTRNIGIAA…AICRYLPSPI (281 aa)) form the tr-type G domain. Residues 15–22 (AHIDAGKT), 83–87 (DTPGH), and 137–140 (NKMD) contribute to the GTP site.

The protein belongs to the TRAFAC class translation factor GTPase superfamily. Classic translation factor GTPase family. EF-G/EF-2 subfamily.

It localises to the cytoplasm. Its function is as follows. Catalyzes the GTP-dependent ribosomal translocation step during translation elongation. During this step, the ribosome changes from the pre-translocational (PRE) to the post-translocational (POST) state as the newly formed A-site-bound peptidyl-tRNA and P-site-bound deacylated tRNA move to the P and E sites, respectively. Catalyzes the coordinated movement of the two tRNA molecules, the mRNA and conformational changes in the ribosome. The sequence is that of Elongation factor G from Karelsulcia muelleri (strain GWSS) (Sulcia muelleri).